The sequence spans 149 residues: Aquaporin-like protein 2 (149 aa).

Residues 1 to 35 form a disordered region; it reads MSNESNDLEKNISHLDPTGVDNAYIPPEQPETKHS. The Cytoplasmic segment spans residues 1 to 47; sequence MSNESNDLEKNISHLDPTGVDNAYIPPEQPETKHSRFNIDRDTLRNH. The chain crosses the membrane as a helical span at residues 48–68; that stretch reads FIAAVGEFCGTFMFLWCAYVI. Over 69 to 89 the chain is Extracellular; it reads CNVANHDVALTTEPEGSHPGQ. The helical transmembrane segment at 90–110 threads the bilayer; the sequence is LIMIALGFGFSVMFSIWCFWW. At 111–149 the chain is on the cytoplasmic side; the sequence is GFEPSRFSLFVFGQSHLSSQMCSDVVSSDHCWDGCWWCR.

This sequence belongs to the MIP/aquaporin (TC 1.A.8) family.

It localises to the endoplasmic reticulum membrane. The protein resides in the cell membrane. In terms of biological role, water channel required to facilitate the transport of water across membranes. Involved in freeze tolerance, osmotolerance and cell flocculation in liquid cultures. Is non-functional in most laboratory strains. This is Aquaporin-like protein 2 (AQY2-2) from Saccharomyces cerevisiae (strain RM11-1a) (Baker's yeast).